A 1070-amino-acid chain; its full sequence is DNA-directed RNA polymerase subunit beta (1070 aa).

Belongs to the RNA polymerase beta chain family. As to quaternary structure, in plastids the minimal PEP RNA polymerase catalytic core is composed of four subunits: alpha, beta, beta', and beta''. When a (nuclear-encoded) sigma factor is associated with the core the holoenzyme is formed, which can initiate transcription.

It localises to the plastid. The protein localises to the chloroplast. It catalyses the reaction RNA(n) + a ribonucleoside 5'-triphosphate = RNA(n+1) + diphosphate. DNA-dependent RNA polymerase catalyzes the transcription of DNA into RNA using the four ribonucleoside triphosphates as substrates. This chain is DNA-directed RNA polymerase subunit beta, found in Populus alba (White poplar).